Reading from the N-terminus, the 107-residue chain is Stellacyanin (107 aa).

The 105-residue stretch at 1–105 (TVYTVGDSAG…GQKVHINVTV (105 aa)) folds into the Phytocyanin domain. Asn-28 carries N-linked (GlcNAc...) asparagine glycosylation. His-46 serves as a coordination point for Cu cation. An intrachain disulfide couples Cys-59 to Cys-93. A glycan (N-linked (GlcNAc...) asparagine) is linked at Asn-60. Cu cation-binding residues include Cys-87, His-92, and Gln-97. Residue Asn-102 is glycosylated (N-linked (GlcNAc...) asparagine).

This is Stellacyanin from Toxicodendron vernicifluum (Japanese lacquer tree).